Reading from the N-terminus, the 704-residue chain is Polyribonucleotide nucleotidyltransferase (704 aa).

Residues Asp-488 and Asp-494 each coordinate Mg(2+). The region spanning 555-614 is the KH domain; the sequence is PRITTIKINPEKIRDVIGKGGATIRALTEETGTTIELDDDGTVKIASSNGEATKEAIRRI. The S1 motif domain maps to 624–692; the sequence is GTVYNGKVVR…RQGRVRLSMK (69 aa).

Belongs to the polyribonucleotide nucleotidyltransferase family. As to quaternary structure, component of the RNA degradosome, which is a multiprotein complex involved in RNA processing and mRNA degradation. It depends on Mg(2+) as a cofactor.

It is found in the cytoplasm. It catalyses the reaction RNA(n+1) + phosphate = RNA(n) + a ribonucleoside 5'-diphosphate. Involved in mRNA degradation. Catalyzes the phosphorolysis of single-stranded polyribonucleotides processively in the 3'- to 5'-direction. In Shewanella pealeana (strain ATCC 700345 / ANG-SQ1), this protein is Polyribonucleotide nucleotidyltransferase.